The following is a 59-amino-acid chain: MAVPKKRTSKSKKRIRKSVWREKTKKIASKAFSLAQSILTNRSKSFYYTTNEKISESTE.

Residues 1-20 (MAVPKKRTSKSKKRIRKSVW) are disordered.

It belongs to the bacterial ribosomal protein bL32 family.

It is found in the plastid. It localises to the chloroplast. In Angiopteris evecta (Mule's foot fern), this protein is Large ribosomal subunit protein bL32c.